The following is a 260-amino-acid chain: Putative sgc region transcriptional regulator (260 aa).

One can recognise an HTH deoR-type domain in the interval 5-61; sequence RPDRIKQMLHYLWQHRHLSTQQAMELFGYAEATVRRDFQYIVNQYPGMIRGHGCLDF. The segment at residues 22-41 is a DNA-binding region (H-T-H motif); sequence LSTQQAMELFGYAEATVRRD.

Its function is as follows. Putative transcriptional regulator for the sgcREAQCX region. The chain is Putative sgc region transcriptional regulator (sgcR) from Escherichia coli (strain K12).